A 236-amino-acid polypeptide reads, in one-letter code: Large ribosomal subunit protein uL3 (236 aa).

The span at 139–149 shows a compositional bias: low complexity; the sequence is SVSHRSHGSTG. The interval 139-165 is disordered; the sequence is SVSHRSHGSTGQRQDPGKVFKGKKMAG. Gln152 is modified (N5-methylglutamine).

The protein belongs to the universal ribosomal protein uL3 family. In terms of assembly, part of the 50S ribosomal subunit. Forms a cluster with proteins L14 and L19. Methylated by PrmB.

Its function is as follows. One of the primary rRNA binding proteins, it binds directly near the 3'-end of the 23S rRNA, where it nucleates assembly of the 50S subunit. In Pelagibacter ubique (strain HTCC1062), this protein is Large ribosomal subunit protein uL3.